Consider the following 105-residue polypeptide: UPF0060 membrane protein Reut_B3679 (105 aa).

4 helical membrane-spanning segments follow: residues Ile4–Trp24, Gly28–Leu48, Ala60–Val80, and Pro82–Phe102.

This sequence belongs to the UPF0060 family.

It localises to the cell inner membrane. The polypeptide is UPF0060 membrane protein Reut_B3679 (Cupriavidus pinatubonensis (strain JMP 134 / LMG 1197) (Cupriavidus necator (strain JMP 134))).